The following is a 283-amino-acid chain: Protein FAM78A (283 aa).

The protein belongs to the FAM78 family.

The protein is Protein FAM78A (FAM78A) of Homo sapiens (Human).